A 171-amino-acid chain; its full sequence is T-cell surface glycoprotein CD3 delta chain (171 aa).

Positions 1-21 (MEHSTFLSGLVLATLLSQVSP) are cleaved as a signal peptide. Topologically, residues 22–105 (FKIPVEELED…CVELDPATLA (84 aa)) are extracellular. A disulfide bridge connects residues Cys-37 and Cys-73. Asn-38, Asn-54, and Asn-74 each carry an N-linked (GlcNAc...) asparagine glycan. The helical transmembrane segment at 106–126 (GIIVTDVIATLLLALGVFCFA) threads the bilayer. Residues 127–171 (GHETGRLSGAADTQALLRNDQVYQPLRDRDDAQYSRLGGNWARNK) lie on the Cytoplasmic side of the membrane. In terms of domain architecture, ITAM spans 138-166 (DTQALLRNDQVYQPLRDRDDAQYSRLGGN). Residues Tyr-149 and Tyr-160 each carry the phosphotyrosine modification.

In terms of assembly, the TCR-CD3 complex is composed of a CD3D/CD3E and a CD3G/CD3E heterodimers that preferentially associate with TCRalpha and TCRbeta, respectively, to form TCRalpha/CD3E/CD3G and TCRbeta/CD3G/CD3E trimers. In turn, the hexamer interacts with CD3Z homodimer to form the TCR-CD3 complex. Alternatively, TCRalpha and TCRbeta can be replaced by TCRgamma and TCRdelta. Interacts with coreceptors CD4 and CD8. Post-translationally, phosphorylated on Tyr residues after T-cell receptor triggering by LCK in association with CD4/CD8. CD3D is mostly present on T-lymphocytes with its TCR-CD3 partners. Present also in fetal NK-cells.

The protein localises to the cell membrane. Part of the TCR-CD3 complex present on T-lymphocyte cell surface that plays an essential role in adaptive immune response. When antigen presenting cells (APCs) activate T-cell receptor (TCR), TCR-mediated signals are transmitted across the cell membrane by the CD3 chains CD3D, CD3E, CD3G and CD3Z. All CD3 chains contain immunoreceptor tyrosine-based activation motifs (ITAMs) in their cytoplasmic domain. Upon TCR engagement, these motifs become phosphorylated by Src family protein tyrosine kinases LCK and FYN, resulting in the activation of downstream signaling pathways. In addition of this role of signal transduction in T-cell activation, CD3D plays an essential role in thymocyte differentiation. Indeed, participates in correct intracellular TCR-CD3 complex assembly and surface expression. In absence of a functional TCR-CD3 complex, thymocytes are unable to differentiate properly. Interacts with CD4 and CD8 and thus serves to establish a functional link between the TCR and coreceptors CD4 and CD8, which is needed for activation and positive selection of CD4 or CD8 T-cells. The polypeptide is T-cell surface glycoprotein CD3 delta chain (CD3D) (Macaca fascicularis (Crab-eating macaque)).